A 662-amino-acid chain; its full sequence is Methionine--tRNA ligase (662 aa).

The short motif at 13 to 23 is the 'HIGH' region element; the sequence is PYTNGPCHLGH. Positions 144, 147, 156, and 160 each coordinate Zn(2+). The short motif at 326–330 is the 'KMSKS' region element; sequence KFSKS. Lys329 lines the ATP pocket. Positions 564-662 constitute a tRNA-binding domain; it reads DFSKVEIKTG…KPVEPGTKIR (99 aa).

The protein belongs to the class-I aminoacyl-tRNA synthetase family. MetG type 1 subfamily. In terms of assembly, homodimer. The cofactor is Zn(2+).

It is found in the cytoplasm. The enzyme catalyses tRNA(Met) + L-methionine + ATP = L-methionyl-tRNA(Met) + AMP + diphosphate. Is required not only for elongation of protein synthesis but also for the initiation of all mRNA translation through initiator tRNA(fMet) aminoacylation. This is Methionine--tRNA ligase from Methanoregula boonei (strain DSM 21154 / JCM 14090 / 6A8).